The primary structure comprises 189 residues: Glycerol-3-phosphate acyltransferase (189 aa).

5 helical membrane-spanning segments follow: residues 1-21 (MVWLLAILAYLLGSLSFAVLL), 50-70 (KLAILTLLGDVGKGLLPVLVA), 72-92 (WLGLGVMEEAWVGIAAVIGHL), 111-131 (MLLGLYPPAVLLAAAAWLLTF), and 151-171 (LLAWQQPGALLPMTVLTGLIV).

This sequence belongs to the PlsY family. In terms of assembly, probably interacts with PlsX.

The protein resides in the cell inner membrane. It catalyses the reaction an acyl phosphate + sn-glycerol 3-phosphate = a 1-acyl-sn-glycero-3-phosphate + phosphate. It participates in lipid metabolism; phospholipid metabolism. Functionally, catalyzes the transfer of an acyl group from acyl-phosphate (acyl-PO(4)) to glycerol-3-phosphate (G3P) to form lysophosphatidic acid (LPA). This enzyme utilizes acyl-phosphate as fatty acyl donor, but not acyl-CoA or acyl-ACP. This Pseudomonas aeruginosa (strain LESB58) protein is Glycerol-3-phosphate acyltransferase.